Reading from the N-terminus, the 184-residue chain is Oligoribonuclease (184 aa).

In terms of domain architecture, Exonuclease spans 8-171 (LIWIDLEMTG…EDIRESVVEL (164 aa)). Y129 is an active-site residue.

It belongs to the oligoribonuclease family.

The protein resides in the cytoplasm. Functionally, 3'-to-5' exoribonuclease specific for small oligoribonucleotides. The protein is Oligoribonuclease of Buchnera aphidicola subsp. Acyrthosiphon pisum (strain APS) (Acyrthosiphon pisum symbiotic bacterium).